Reading from the N-terminus, the 262-residue chain is Spindlin-1 (262 aa).

A disordered region spans residues 1–49 (MKTPFGKTPGQRSRADAGHAGVSANMMKKRTSHKKHRTSVGPSKPVSQP). Glycyl lysine isopeptide (Lys-Gly) (interchain with G-Cter in SUMO2) cross-links involve residues Lys-7 and Lys-28. A compositionally biased stretch (basic residues) spans 27 to 38 (MKKRTSHKKHRT). The residue at position 44 (Lys-44) is an N6-acetyllysine; alternate. Lys-44 participates in a covalent cross-link: Glycyl lysine isopeptide (Lys-Gly) (interchain with G-Cter in SUMO2); alternate. The tract at residues 53 to 116 (IVGCRIQHGW…RVSALEVLPD (64 aa)) is tudor-like domain 1. A histone H3K4me3 and H3R8me2a binding region spans residues 93-98 (GFDCVY). Residues Ser-109 and Ser-124 each carry the phosphoserine; by AURKA modification. The interval 132 to 193 (MIGKAVEHMF…DYKEGDLRIM (62 aa)) is tudor-like domain 2. Residue Glu-142 is a region of interest, histone H3K4me3 and H3R8me2a binding. Ser-199 is subject to Phosphoserine. Residues 213-262 (LVGKQVEYAKEDGSKRTGMVIHQVEAKPSVYFIKFDDDFHIYVYDLVKTS) form a tudor-like domain 3 region. Residues 250–252 (DFH) form a histone H3K4me3 and H3R8me2a binding region.

The protein belongs to the SPIN/STSY family. In terms of assembly, homodimer; may form higher-order oligomers. Interacts with TCF7L2/TCF4; the interaction is direct. Interacts with HABP4 and SERBP1. Interacts with SPINDOC; SPINDOC stabilizes SPIN1 and enhances its association with bivalent H3K4me3K9me3 mark. Interacts with SPOCD1; promoting recruitment of PIWIL4 and SPOCD1 to transposons. Post-translationally, phosphorylated during oocyte meiotic maturation.

The protein resides in the nucleus. The protein localises to the nucleolus. Chromatin reader that specifically recognizes and binds histone H3 both trimethylated at 'Lys-4' and 'Lys-9' (H3K4me3K9me3) and is involved in piRNA-mediated retrotransposon silencing during spermatogenesis. Plays a key role in the initiation of the PIWIL4-piRNA pathway, a pathway that directs transposon DNA methylation and silencing in the male embryonic germ cells, by promoting recruitment of DNA methylation machinery to transposons: binds young, but not old, LINE1 transposons, which are specifically marked with H3K4me3K9me3, and promotes the recruitment of PIWIL4 and SPOCD1 to transposons, leading to piRNA-directed DNA methylation. Also recognizes and binds histone H3 both trimethylated at 'Lys-4' and asymmetrically dimethylated at 'Arg-8' (H3K4me3 and H3R8me2a) and acts as an activator of Wnt signaling pathway downstream of PRMT2. Overexpression induces metaphase arrest and chromosomal instability. Overexpression induces metaphase arrest and chromosomal instability. Localizes to active rDNA loci and promotes the expression of rRNA genes. May play a role in cell-cycle regulation during the transition from gamete to embryo. Involved in oocyte meiotic resumption, a process that takes place before ovulation to resume meiosis of oocytes blocked in prophase I: may act by regulating maternal transcripts to control meiotic resumption. In Rattus norvegicus (Rat), this protein is Spindlin-1 (Spin1).